A 669-amino-acid chain; its full sequence is UvrABC system protein B (669 aa).

A Helicase ATP-binding domain is found at 26–183 (EGLEDGLAHQ…RRLADLQYTR (158 aa)). Residue 39–46 (GVTGSGKT) participates in ATP binding. The Beta-hairpin motif lies at 92-115 (YYDYYQPEAYVPSSDTFIEKDASV). Residues 431-593 (QVDDLLSEIR…IVPKGLNKKI (163 aa)) form the Helicase C-terminal domain. Residues 629-664 (EKEIQRLETEMYQHAKDLEFEKAAQTRDKLQTLRAQ) form the UVR domain.

The protein belongs to the UvrB family. As to quaternary structure, forms a heterotetramer with UvrA during the search for lesions. Interacts with UvrC in an incision complex.

It is found in the cytoplasm. In terms of biological role, the UvrABC repair system catalyzes the recognition and processing of DNA lesions. A damage recognition complex composed of 2 UvrA and 2 UvrB subunits scans DNA for abnormalities. Upon binding of the UvrA(2)B(2) complex to a putative damaged site, the DNA wraps around one UvrB monomer. DNA wrap is dependent on ATP binding by UvrB and probably causes local melting of the DNA helix, facilitating insertion of UvrB beta-hairpin between the DNA strands. Then UvrB probes one DNA strand for the presence of a lesion. If a lesion is found the UvrA subunits dissociate and the UvrB-DNA preincision complex is formed. This complex is subsequently bound by UvrC and the second UvrB is released. If no lesion is found, the DNA wraps around the other UvrB subunit that will check the other stand for damage. The sequence is that of UvrABC system protein B from Proteus mirabilis (strain HI4320).